The following is a 94-amino-acid chain: Conotoxin Im026 (94 aa).

An N-terminal signal peptide occupies residues M1–G24. Residues D25–R59 constitute a propeptide that is removed on maturation.

In terms of processing, contains 4 disulfide bonds. In terms of tissue distribution, expressed by the venom duct.

Its subcellular location is the secreted. Its function is as follows. Probable neurotoxin. In Conus imperialis (Imperial cone), this protein is Conotoxin Im026.